Consider the following 863-residue polypeptide: Probable beta-glucosidase A (863 aa).

Residues Met1–Ala19 form the signal peptide. N-linked (GlcNAc...) asparagine glycosylation is found at Asn65, Asn214, and Asn255. The active site involves Asp283. Asn318, Asn325, Asn357, Asn493, Asn526, Asn545, Asn567, Asn664, and Asn715 each carry an N-linked (GlcNAc...) asparagine glycan. A disordered region spans residues Lys720–Gly754.

The protein belongs to the glycosyl hydrolase 3 family.

Its subcellular location is the secreted. The catalysed reaction is Hydrolysis of terminal, non-reducing beta-D-glucosyl residues with release of beta-D-glucose.. It functions in the pathway glycan metabolism; cellulose degradation. In terms of biological role, beta-glucosidases are one of a number of cellulolytic enzymes involved in the degradation of cellulosic biomass. Catalyzes the last step releasing glucose from the inhibitory cellobiose. In Emericella nidulans (strain FGSC A4 / ATCC 38163 / CBS 112.46 / NRRL 194 / M139) (Aspergillus nidulans), this protein is Probable beta-glucosidase A (bglA).